Here is a 2287-residue protein sequence, read N- to C-terminus: Protein Ycf2 (2287 aa).

An ATP-binding site is contributed by 1632-1639 (GSIGTGRS).

The protein belongs to the Ycf2 family.

It is found in the plastid. The protein localises to the chloroplast stroma. Probable ATPase of unknown function. Its presence in a non-photosynthetic plant (Epifagus virginiana) and experiments in tobacco indicate that it has an essential function which is probably not related to photosynthesis. The polypeptide is Protein Ycf2 (Calycanthus floridus var. glaucus (Eastern sweetshrub)).